The following is a 100-amino-acid chain: NADH-quinone oxidoreductase subunit K (100 aa).

The next 3 membrane-spanning stretches (helical) occupy residues 4-24 (TSYYVLLSAILFTIGVLGVLL), 29-49 (IVVFMAVELMLNAANLALVAF), and 60-80 (VIVFFVITVAAAEVAVGLALL).

It belongs to the complex I subunit 4L family. As to quaternary structure, NDH-1 is composed of 14 different subunits. Subunits NuoA, H, J, K, L, M, N constitute the membrane sector of the complex.

It is found in the cell membrane. It carries out the reaction a quinone + NADH + 5 H(+)(in) = a quinol + NAD(+) + 4 H(+)(out). Its function is as follows. NDH-1 shuttles electrons from NADH, via FMN and iron-sulfur (Fe-S) centers, to quinones in the respiratory chain. The immediate electron acceptor for the enzyme in this species is believed to be ubiquinone. Couples the redox reaction to proton translocation (for every two electrons transferred, four hydrogen ions are translocated across the cytoplasmic membrane), and thus conserves the redox energy in a proton gradient. The protein is NADH-quinone oxidoreductase subunit K of Chloroflexus aurantiacus (strain ATCC 29366 / DSM 635 / J-10-fl).